Consider the following 436-residue polypeptide: Proteasome-activating nucleotidase (436 aa).

A coiled-coil region spans residues 15–97 (EELCRLYRSL…LKSESEQLRS (83 aa)). Residues 222–227 (GTGKTL) and histidine 361 each bind ATP. The tract at residues 434–436 (MFA) is docks into pockets in the proteasome alpha-ring to cause gate opening.

Belongs to the AAA ATPase family. In terms of assembly, homohexamer. The hexameric complex has a two-ring architecture resembling a top hat that caps the 20S proteasome core at one or both ends. Upon ATP-binding, the C-terminus of PAN interacts with the alpha-rings of the proteasome core by binding to the intersubunit pockets.

It is found in the cytoplasm. Functionally, ATPase which is responsible for recognizing, binding, unfolding and translocation of substrate proteins into the archaeal 20S proteasome core particle. Is essential for opening the gate of the 20S proteasome via an interaction with its C-terminus, thereby allowing substrate entry and access to the site of proteolysis. Thus, the C-termini of the proteasomal ATPase function like a 'key in a lock' to induce gate opening and therefore regulate proteolysis. Unfolding activity requires energy from ATP hydrolysis, whereas ATP binding alone promotes ATPase-20S proteasome association which triggers gate opening, and supports translocation of unfolded substrates. The sequence is that of Proteasome-activating nucleotidase from Methanoregula boonei (strain DSM 21154 / JCM 14090 / 6A8).